We begin with the raw amino-acid sequence, 181 residues long: Transcription antitermination protein NusB (181 aa).

Residues 1–36 (MTEDNNKAAGAKPRPARQVRTGLTSTGARKASAKSN) form a disordered region.

Belongs to the NusB family.

Involved in transcription antitermination. Required for transcription of ribosomal RNA (rRNA) genes. Binds specifically to the boxA antiterminator sequence of the ribosomal RNA (rrn) operons. This chain is Transcription antitermination protein NusB, found in Variovorax paradoxus (strain S110).